A 387-amino-acid chain; its full sequence is NifS-like protein (387 aa).

Pyridoxal 5'-phosphate-binding positions include 58–59 and 184–186; these read SE and SIN.

It belongs to the class-V pyridoxal-phosphate-dependent aminotransferase family. NifS/IscS subfamily. It depends on pyridoxal 5'-phosphate as a cofactor.

It is found in the virion. This is NifS-like protein from African swine fever virus (isolate Tick/South Africa/Pretoriuskop Pr4/1996) (ASFV).